A 235-amino-acid polypeptide reads, in one-letter code: Phosphoribosylaminoimidazole-succinocarboxamide synthase (235 aa).

Belongs to the SAICAR synthetase family.

The enzyme catalyses 5-amino-1-(5-phospho-D-ribosyl)imidazole-4-carboxylate + L-aspartate + ATP = (2S)-2-[5-amino-1-(5-phospho-beta-D-ribosyl)imidazole-4-carboxamido]succinate + ADP + phosphate + 2 H(+). It participates in purine metabolism; IMP biosynthesis via de novo pathway; 5-amino-1-(5-phospho-D-ribosyl)imidazole-4-carboxamide from 5-amino-1-(5-phospho-D-ribosyl)imidazole-4-carboxylate: step 1/2. This Thermococcus kodakarensis (strain ATCC BAA-918 / JCM 12380 / KOD1) (Pyrococcus kodakaraensis (strain KOD1)) protein is Phosphoribosylaminoimidazole-succinocarboxamide synthase.